Here is a 352-residue protein sequence, read N- to C-terminus: Small ribosomal subunit biogenesis GTPase RsgA (352 aa).

A compositionally biased stretch (basic residues) spans 1–15 (MTKRKLTQNQKRRIH). A disordered region spans residues 1–26 (MTKRKLTQNQKRRIHSNNVKALDRHH). The 169-residue stretch at 106-274 (ENEIARPDYY…LIDSPGIREF (169 aa)) folds into the CP-type G domain. GTP is bound by residues 162–165 (NKVD) and 216–224 (GQSGVGKSS). Cys298, Cys303, His305, and Cys311 together coordinate Zn(2+).

It belongs to the TRAFAC class YlqF/YawG GTPase family. RsgA subfamily. As to quaternary structure, monomer. Associates with 30S ribosomal subunit, binds 16S rRNA. The cofactor is Zn(2+).

It localises to the cytoplasm. In terms of biological role, one of several proteins that assist in the late maturation steps of the functional core of the 30S ribosomal subunit. Helps release RbfA from mature subunits. May play a role in the assembly of ribosomal proteins into the subunit. Circularly permuted GTPase that catalyzes slow GTP hydrolysis, GTPase activity is stimulated by the 30S ribosomal subunit. The protein is Small ribosomal subunit biogenesis GTPase RsgA of Mannheimia succiniciproducens (strain KCTC 0769BP / MBEL55E).